We begin with the raw amino-acid sequence, 372 residues long: uncharacterized protein (372 aa).

Composition is skewed to basic residues over residues 1 to 11 (MNKILGLRRAK) and 38 to 48 (RLRRGMQRLSR). The tract at residues 1 to 127 (MNKILGLRRA…NSGTRDTPCW (127 aa)) is disordered. Residues 50 to 61 (GYGDNRRSRGSE) show a composition bias toward basic and acidic residues. Residues 93–104 (GKTSPCGSSGTP) are compositionally biased toward polar residues.

This is an uncharacterized protein from Psittacid herpesvirus 1 (isolate Amazon parrot/-/97-0001/1997) (PsHV-1).